Here is a 129-residue protein sequence, read N- to C-terminus: Venom CUB domain-containing protein 1 (129 aa).

Residues 1–18 (MKLLGVLITIYCIASTLA) form the signal peptide. Residues 19-121 (IDVNVPSNGM…KASCKAYSIT (103 aa)) form the CUB domain. Cys66 and Cys83 are joined by a disulfide.

This sequence belongs to the venom CUB family. Post-translationally, contains 2 disulfide bonds. As to expression, expressed by the venom gland.

The protein localises to the secreted. This is Venom CUB domain-containing protein 1 from Platymeris rhadamanthus (Red spot assassin bug).